Reading from the N-terminus, the 465-residue chain is Protein DML1 (465 aa).

The protein belongs to the misato family.

It localises to the mitochondrion. Its function is as follows. Involved in the partitioning of the mitochondrial organelle and mitochondrial DNA (mtDNA) inheritance. The polypeptide is Protein DML1 (DML1) (Eremothecium gossypii (strain ATCC 10895 / CBS 109.51 / FGSC 9923 / NRRL Y-1056) (Yeast)).